Here is a 305-residue protein sequence, read N- to C-terminus: Large ribosomal subunit protein uL10 (305 aa).

The protein belongs to the universal ribosomal protein uL10 family. As to quaternary structure, P0 forms a pentameric complex by interaction with dimers of P1 and P2. In terms of processing, phosphorylated.

Its function is as follows. Ribosomal protein P0 is the functional equivalent of E.coli protein L10. In Dictyostelium discoideum (Social amoeba), this protein is Large ribosomal subunit protein uL10 (rplp0).